The chain runs to 487 residues: Transcription factor GTE5, chloroplastic (487 aa).

Residues 1-32 (MSSEHISGGGASKTKKHKWSSSQNRPKPMGVS) constitute a chloroplast transit peptide. Disordered regions lie at residues 1–48 (MSSE…NSFA), 93–127 (ANPGGSMAKSGVVGRSKKVKTGNGGGKKSGHGADK), and 400–487 (KNEA…DNGN). The 107-residue stretch at 127 to 233 (KGTVQIFKNC…NMFEDKWVSI (107 aa)) folds into the Bromo domain. Residues 320–401 (EEEAPVNNRD…GYKESLSKKN (82 aa)) enclose the NET domain. Basic and acidic residues predominate over residues 400 to 414 (KNEAHGFGSERDAES). A compositionally biased stretch (polar residues) spans 415–435 (VHNSIQEPTTLVSGTTTSRVT). Low complexity predominate over residues 451 to 487 (NNASGSSSSNSSSSDSGSCSSDTDSDSSSGRGSDNGN).

Interacts with SIZ1 (via PHD domain). In terms of processing, sumoylated by SIZ1.

It localises to the plastid. Its subcellular location is the chloroplast. In Arabidopsis thaliana (Mouse-ear cress), this protein is Transcription factor GTE5, chloroplastic (GTE5).